Consider the following 1237-residue polypeptide: Rho guanine nucleotide exchange factor 10-like protein (1237 aa).

2 disordered regions span residues 1–117 (MASS…SSRR) and 132–203 (YDDV…QPKM). Residues 25–45 (EAEDDPGEGFEFDDSDDDEDT) are compositionally biased toward acidic residues. Ser-39 bears the Phosphoserine mark. Residues Tyr-132 and Tyr-153 each carry the phosphotyrosine modification. Basic and acidic residues-rich tracts occupy residues 146 to 163 (EAERNQPYEDARQDRAPQ) and 184 to 194 (EEAKPEAEPTK). At Ser-241 the chain carries Phosphoserine. The 188-residue stretch at 276–463 (VRRHILGSIV…ETLAEKLNEQ (188 aa)) folds into the DH domain. 2 disordered regions span residues 1091-1118 (QEEAEGQQAEEDKPDGPAPEPAPVPASH) and 1142-1164 (PGPLLSVREPEPADGSALEHSEE).

Interacts with RHOA, RHOB and RHOC.

Its subcellular location is the cytoplasm. In terms of biological role, acts as a guanine nucleotide exchange factor (GEF) for RHOA, RHOB and RHOC. In Bos taurus (Bovine), this protein is Rho guanine nucleotide exchange factor 10-like protein (ARHGEF10L).